The chain runs to 477 residues: Spliceosome-associated protein CWC27 homolog (477 aa).

The region spanning 11–166 is the PPIase cyclophilin-type domain; it reads SNGKVLLKTT…NPHKIKCTEV (156 aa). 2 disordered regions span residues 203–355 and 401–477; these read LLSF…AENT and TQAI…KERR. Acidic residues predominate over residues 208-218; that stretch reads EEAEEDEEEVN. Composition is skewed to basic and acidic residues over residues 230–240 and 247–258; these read SSHDLLKDDPR and VEREKDSQSADS. The span at 259–279 shows a compositional bias: acidic residues; the sequence is DKDEDEMSDDDDEEEDDEMDS. Basic and acidic residues-rich tracts occupy residues 280–299, 311–353, and 430–442; these read DEKH…DPSK, EERK…KEAE, and QFEE…KDAN. Positions 308–381 form a coiled coil; sequence DEAEERKSSR…EEVRKKNTNK (74 aa).

It belongs to the cyclophilin-type PPIase family. Part of the activated spliceosome B/catalytic step 1 spliceosome, one of the forms of the spliceosome which has a well-formed active site but still cannot catalyze the branching reaction and is composed at least of 52 proteins, the U2, U5 and U6 snRNAs and the pre-mRNA. Recruited during early steps of activated spliceosome B maturation, it is probably one of the first proteins released from this complex as he matures to the spliceosome C complex. Component of the minor spliceosome, which splices U12-type introns.

The protein resides in the nucleus. In terms of biological role, as part of the spliceosome, plays a role in pre-mRNA splicing. Probable inactive PPIase with no peptidyl-prolyl cis-trans isomerase activity. In Xenopus laevis (African clawed frog), this protein is Spliceosome-associated protein CWC27 homolog (cwc27).